A 455-amino-acid chain; its full sequence is Pentatricopeptide repeat-containing protein At3g26630, chloroplastic (455 aa).

The N-terminal 19 residues, 1-19 (MAAPSPSSPPNLLSPPPFR), are a transit peptide targeting the chloroplast. PPR repeat units follow at residues 51 to 81 (DQLL…LQSP), 82 to 117 (STFT…QSQF), 118 to 152 (DKFT…GFFN), 153 to 187 (DVFF…SIVS), 188 to 214 (WTTM…MPMR), 215 to 249 (NVVS…DVKP), 250 to 284 (NEFT…GFVL), 285 to 315 (DCFL…MQGK), 316 to 350 (SLAT…ASVE), 352 to 387 (DAIT…GISP), and 388 to 418 (IREH…MDSD).

This sequence belongs to the PPR family. PCMP-A subfamily.

The protein localises to the plastid. Its subcellular location is the chloroplast. The chain is Pentatricopeptide repeat-containing protein At3g26630, chloroplastic (PCMP-A6) from Arabidopsis thaliana (Mouse-ear cress).